Here is a 301-residue protein sequence, read N- to C-terminus: Phospholipase A1 (301 aa).

Cys-4 and Cys-87 are disulfide-bonded. Residue Ser-137 is the Nucleophile of the active site. Asp-165 (charge relay system) is an active-site residue. Intrachain disulfides connect Cys-176–Cys-181 and Cys-219–Cys-228. Catalysis depends on His-230, which acts as the Charge relay system. Intrachain disulfides connect Cys-245–Cys-269, Cys-246–Cys-294, and Cys-262–Cys-267.

Belongs to the AB hydrolase superfamily. Lipase family. In terms of tissue distribution, expressed by the venom gland.

Its subcellular location is the secreted. The enzyme catalyses a 1,2-diacyl-sn-glycero-3-phosphocholine + H2O = a 2-acyl-sn-glycero-3-phosphocholine + a fatty acid + H(+). Functionally, catalyzes the hydrolysis of phosphatidylcholine with phospholipase A1 activity. May act as an allergen and induce hemolytic activity. This chain is Phospholipase A1, found in Vespa crabro (European hornet).